A 223-amino-acid polypeptide reads, in one-letter code: Phosphoribosylformylglycinamidine synthase subunit PurQ (223 aa).

Positions 4–223 (RIGVITFPGT…FQSVLSTLVS (220 aa)) constitute a Glutamine amidotransferase type-1 domain. C87 (nucleophile) is an active-site residue. Catalysis depends on residues H195 and E197.

Part of the FGAM synthase complex composed of 1 PurL, 1 PurQ and 2 PurS subunits.

The protein localises to the cytoplasm. It catalyses the reaction N(2)-formyl-N(1)-(5-phospho-beta-D-ribosyl)glycinamide + L-glutamine + ATP + H2O = 2-formamido-N(1)-(5-O-phospho-beta-D-ribosyl)acetamidine + L-glutamate + ADP + phosphate + H(+). The enzyme catalyses L-glutamine + H2O = L-glutamate + NH4(+). It functions in the pathway purine metabolism; IMP biosynthesis via de novo pathway; 5-amino-1-(5-phospho-D-ribosyl)imidazole from N(2)-formyl-N(1)-(5-phospho-D-ribosyl)glycinamide: step 1/2. In terms of biological role, part of the phosphoribosylformylglycinamidine synthase complex involved in the purines biosynthetic pathway. Catalyzes the ATP-dependent conversion of formylglycinamide ribonucleotide (FGAR) and glutamine to yield formylglycinamidine ribonucleotide (FGAM) and glutamate. The FGAM synthase complex is composed of three subunits. PurQ produces an ammonia molecule by converting glutamine to glutamate. PurL transfers the ammonia molecule to FGAR to form FGAM in an ATP-dependent manner. PurS interacts with PurQ and PurL and is thought to assist in the transfer of the ammonia molecule from PurQ to PurL. This Corynebacterium jeikeium (strain K411) protein is Phosphoribosylformylglycinamidine synthase subunit PurQ.